A 1832-amino-acid polypeptide reads, in one-letter code: Zinc finger protein 646 (1832 aa).

8 C2H2-type zinc fingers span residues 8–31 (LSCS…ELLH), 48–70 (YRCQ…RRTH), 75–97 (FPCT…MRTH), 239–261 (YKCS…RQSH), 266–288 (YPCA…SRLH), 294–316 (YHCP…QQSH), 374–396 (FRCG…RKSH), and 401–424 (YPCS…RAHH). The interval 26-47 (HRELLHPSPNQDSEEADSIPRP) is disordered. Over residues 94–108 (MRTHAPEGRRRHRPP) the composition is skewed to basic residues. The segment at 94–200 (MRTHAPEGRR…TNSARAPPLP (107 aa)) is disordered. The span at 313–329 (QQSHEGERQEPRWEEKG) shows a compositional bias: basic and acidic residues. The interval 313-346 (QQSHEGERQEPRWEEKGMPTTNGHTDESSQDQLP) is disordered. Lys451 is covalently cross-linked (Glycyl lysine isopeptide (Lys-Gly) (interchain with G-Cter in SUMO2)). 2 consecutive C2H2-type zinc fingers follow at residues 465–487 (YKCS…RHSH) and 492–514 (YQCS…VRVH). Glycyl lysine isopeptide (Lys-Gly) (interchain with G-Cter in SUMO2) cross-links involve residues Lys534 and Lys557. A C2H2-type 11 zinc finger spans residues 575–597 (HICSICGLLFEDAESLERHGLTH). Phosphoserine is present on Ser612. 2 C2H2-type zinc fingers span residues 617 to 639 (FACR…RQTH) and 644 to 666 (FSCG…LRRH). The disordered stretch occupies residues 660-810 (KNHLRRHSRR…QPNSSSHSAN (151 aa)). Residues 661–678 (NHLRRHSRRRSRRHRKRA) show a composition bias toward basic residues. A Glycyl lysine isopeptide (Lys-Gly) (interchain with G-Cter in SUMO2) cross-link involves residue Lys688. Residues 735–767 (EGDKCGLERDETHFQGDKESGGTGEGLERKDAS) show a composition bias toward basic and acidic residues. A compositionally biased stretch (polar residues) spans 798–810 (ATGQPNSSSHSAN). 3 C2H2-type zinc fingers span residues 821 to 843 (HTCS…RPCH), 848 to 870 (YQCS…FQNH), and 881 to 904 (FLCC…RQAH). The segment at 901–931 (RQAHSSSGMTEGSEEEGEEEGVAEAAPARSP) is disordered. Residues 912–922 (GSEEEGEEEGV) show a composition bias toward acidic residues. The C2H2-type 17; degenerate zinc-finger motif lies at 958-980 (HICGCCGQTYDDLGSLERHHQSQ). C2H2-type zinc fingers lie at residues 1052–1074 (FRCN…RKIH) and 1079–1101 (FLCP…LRNH). A disordered region spans residues 1103 to 1148 (RCKGSEPQVGPIPEAAGSSELQVGPIPEGGSNKPQHMAEEGPGQAE). Residues Lys1157, Lys1168, and Lys1178 each participate in a glycyl lysine isopeptide (Lys-Gly) (interchain with G-Cter in SUMO2) cross-link. 6 C2H2-type zinc fingers span residues 1203–1225 (FSCE…RQSH), 1230–1252 (FGCQ…RRIH), 1258–1280 (FRCS…QRVH), 1299–1321 (FRCG…RRSH), 1326–1348 (YSCP…QRLH), and 1364–1386 (VRCA…LREH). The tract at residues 1274-1294 (ASHQRVHMERRGGGGTRKATR) is disordered. Disordered regions lie at residues 1377-1481 (GSLE…WVPQ) and 1509-1529 (TLSH…QPGS). The segment covering 1378 to 1393 (SLERHLREHEETEREP) has biased composition (basic and acidic residues). A compositionally biased stretch (polar residues) spans 1406–1417 (SEANLTGSQGLE). Positions 1427 to 1438 (PHLEDGVPRPGE) are enriched in basic and acidic residues. Positions 1460-1475 (GKAGGWPVGGGLGNHS) are enriched in gly residues. 6 consecutive C2H2-type zinc fingers follow at residues 1557-1579 (HYCL…SHNH), 1585-1607 (FACP…LQAH), 1677-1699 (FRCT…QKAH), 1704-1726 (YPCS…SRTH), 1732-1754 (HCCS…GRVH), and 1761-1783 (FTCP…QQQH). Residues 1606 to 1672 (AHARGHSQVP…QAVTSMAAED (67 aa)) are disordered. The interval 1781–1832 (QQHQEEWTVAGSGAPVAPVTGRGDLPLPPPPTPTTPLLDPSPQWPADLSFSL) is disordered.

Belongs to the krueppel C2H2-type zinc-finger protein family.

The protein resides in the nucleus. May be involved in transcriptional regulation. This chain is Zinc finger protein 646, found in Homo sapiens (Human).